The following is a 340-amino-acid chain: MNVFEPRLSSWLENAGDDDDVVLSSRIRLARNLKDEQFPIYDQKEEVVDNIAEVFDDNFTLIKMNQISKLQKALLVEKHLISPYMMNKSEYGAVLLNEEENVSIMLNEEDHLRIQCMTPGLRLFDALEAALQIDGYVEEKLTYAFDKQFGYLTSCVTNIGTGMRASVMVHLPGLVTTKRIKSVIEAIRSLGFVVRGIYGEGSMPASSIFQVSNQVTLGKTETEIVEDLTQVMEQIIMQERVARTTLKQKFHIALEDRVFRSYGLLMNCRIISMQEASDAISDIRLGVELGFFEHISRQKMNELVLFSQPAFLRKEAGRDMDELEEKVIRAKVIREILGDK.

The 222-residue stretch at 21-242 folds into the Phosphagen kinase C-terminal domain; it reads VVLSSRIRLA…EQIIMQERVA (222 aa). Residues 24–28, His-79, Arg-113, 164–168, and 195–200 each bind ATP; these read SSRIR, RASVM, and RGIYGE.

This sequence belongs to the ATP:guanido phosphotransferase family.

It catalyses the reaction L-arginyl-[protein] + ATP = N(omega)-phospho-L-arginyl-[protein] + ADP + H(+). Catalyzes the specific phosphorylation of arginine residues in proteins. This chain is Protein-arginine kinase, found in Listeria innocua serovar 6a (strain ATCC BAA-680 / CLIP 11262).